An 856-amino-acid chain; its full sequence is MAEGFAANRQWIGPEEAEELLDFDIATQMSEEGPLNPGVNPFRVPGITEKEKQNYCNILQPKLQDLRNEIQEVKLEEGNAGKFRRARFLRYSDERVLSLVHAFIGYCIYLGNRNKLGSLRHDIDIEAPQEECYNNREKGTTDNIKYGRRCCLGTVTLYLILFTGVIVYSQTAGAQVVWRLPPLVVPVEESEIIFWDCWAPEEPACQDFLGAMIHLKAKTNISIREGPTLGNWAREIWATLFKKATRQCRRGRIWKRWNETITGPSGCANNTCYNVSVIVPDYQCYLDRVDTWLQGKINISLCLTGGKMLYNKVTKQLSYCTDPLQIPLINYTFGPNQTCMWNTSQIQDPEIPKCGWWNQMAYYNSCKWEEAKVKFHCQRTQSQPGSWFRAISSWKQRNRWEWRPDFKSKKVKISLPCNSTKNLTFAMRSSGDYGEVTGAWIEFGCHRNKSNLHTEARFRIRCRWNVGSDTSLIDTCGNTPNVSGANPVDCTMYSNKMYNCSLQNGFTMKVDDLIVHFNMTKAVEMYNIAGNWSCTSDLPSSWGYMNCNCTNSSSSYSGTKMACPSNRGILRNWYNPVAGLRQSLEQYQVVKQPDYLLVPEEVMEYKPRRKRAAIHVMLALATVLSIAGAGTGATAIGMVTQYHQVLATHQEAIEKVTGALKINNLRLVTLEHQVLVIGLKVEAMEKFLYTAFAMQELGCNQNQFFCKIPLELWTRYNMTINQTIWNHGNITLGEWYNQTKDLQQKFYEIIMDIEQNNVQGKTGIQQLQKWEDWVRWIGNIPQYLKGLLGGILGIGLGVLLLILCLPTLVDCIRNCIHKILGYTVIAMPEVEGEEIQPQMELRRNGRQCGMSEKEEE.

The Extracellular segment spans residues 1–785 (MAEGFAANRQ…WIGNIPQYLK (785 aa)). N-linked (GlcNAc...) asparagine; by host glycans are attached at residues N220, N258, N269, N274, N298, N330, N336, N342, N418, N422, N448, N481, N499, N518, N531, N548, and N551. The fusion peptide stretch occupies residues 616 to 636 (VMLALATVLSIAGAGTGATAI). Residues 643-693 (HQVLATHQEAIEKVTGALKINNLRLVTLEHQVLVIGLKVEAMEKFLYTAFA) are a coiled coil. The segment at 662–680 (INNLRLVTLEHQVLVIGLK) is immunosuppression. N717, N721, N729, and N737 each carry an N-linked (GlcNAc...) asparagine; by host glycan. A coiled-coil region spans residues 736-772 (YNQTKDLQQKFYEIIMDIEQNNVQGKTGIQQLQKWED). A helical transmembrane segment spans residues 786 to 806 (GLLGGILGIGLGVLLLILCLP). Residues 807-856 (TLVDCIRNCIHKILGYTVIAMPEVEGEEIQPQMELRRNGRQCGMSEKEEE) are Cytoplasmic-facing.

In terms of assembly, the mature envelope protein (Env) consists of a trimer of SU-TM heterodimers attached by noncovalent interactions or by a labile interchain disulfide bond. In terms of processing, specific enzymatic cleavages in vivo yield mature proteins. Envelope glycoproteins are synthesized as an inactive precursor that is N-glycosylated and processed likely by host cell furin or by a furin-like protease in the Golgi to yield the mature SU and TM proteins. The cleavage site between SU and TM requires the minimal sequence [KR]-X-[KR]-R.

Its subcellular location is the virion membrane. The protein localises to the host cell membrane. In terms of biological role, the surface protein (SU) attaches the virus to the host cell by binding to its receptor. This interaction triggers the refolding of the transmembrane protein (TM) and is thought to activate its fusogenic potential by unmasking its fusion peptide. Fusion occurs at the host cell plasma membrane. Its function is as follows. The transmembrane protein (TM) acts as a class I viral fusion protein. Under the current model, the protein has at least 3 conformational states: pre-fusion native state, pre-hairpin intermediate state, and post-fusion hairpin state. During viral and target cell membrane fusion, the coiled coil regions (heptad repeats) assume a trimer-of-hairpins structure, positioning the fusion peptide in close proximity to the C-terminal region of the ectodomain. The formation of this structure appears to drive apposition and subsequent fusion of viral and target cell membranes. Membranes fusion leads to delivery of the nucleocapsid into the cytoplasm. This chain is Envelope glycoprotein gp150 (env), found in Felidae (cat family).